A 331-amino-acid chain; its full sequence is DNA-directed RNA polymerase subunit alpha (331 aa).

The tract at residues 1–223 is alpha N-terminal domain (alpha-NTD); that stretch reads MDQKRPQLKA…DELTVFGNVE (223 aa). Positions 260-331 are alpha C-terminal domain (alpha-CTD); that stretch reads PYPADLDTPR…LAQFGLALRD (72 aa).

This sequence belongs to the RNA polymerase alpha chain family. In terms of assembly, homodimer. The RNAP catalytic core consists of 2 alpha, 1 beta, 1 beta' and 1 omega subunit. When a sigma factor is associated with the core the holoenzyme is formed, which can initiate transcription.

The catalysed reaction is RNA(n) + a ribonucleoside 5'-triphosphate = RNA(n+1) + diphosphate. In terms of biological role, DNA-dependent RNA polymerase catalyzes the transcription of DNA into RNA using the four ribonucleoside triphosphates as substrates. In Deinococcus geothermalis (strain DSM 11300 / CIP 105573 / AG-3a), this protein is DNA-directed RNA polymerase subunit alpha.